The primary structure comprises 470 residues: Ribulose bisphosphate carboxylase large chain (470 aa).

The residue at position 5 (lysine 5) is an N6,N6,N6-trimethyllysine. Asparagine 114 and threonine 164 together coordinate substrate. Catalysis depends on lysine 166, which acts as the Proton acceptor. A substrate-binding site is contributed by lysine 168. Lysine 192, aspartate 194, and glutamate 195 together coordinate Mg(2+). The residue at position 192 (lysine 192) is an N6-carboxylysine. Histidine 285 acts as the Proton acceptor in catalysis. Substrate-binding residues include arginine 286, histidine 318, and serine 370.

It belongs to the RuBisCO large chain family. Type I subfamily. Heterohexadecamer of 8 large chains and 8 small chains; disulfide-linked. The disulfide link is formed within the large subunit homodimers. The cofactor is Mg(2+). In terms of processing, the disulfide bond which can form in the large chain dimeric partners within the hexadecamer appears to be associated with oxidative stress and protein turnover.

Its subcellular location is the plastid. The protein resides in the chloroplast. It carries out the reaction 2 (2R)-3-phosphoglycerate + 2 H(+) = D-ribulose 1,5-bisphosphate + CO2 + H2O. The enzyme catalyses D-ribulose 1,5-bisphosphate + O2 = 2-phosphoglycolate + (2R)-3-phosphoglycerate + 2 H(+). Functionally, ruBisCO catalyzes two reactions: the carboxylation of D-ribulose 1,5-bisphosphate, the primary event in carbon dioxide fixation, as well as the oxidative fragmentation of the pentose substrate in the photorespiration process. Both reactions occur simultaneously and in competition at the same active site. This chain is Ribulose bisphosphate carboxylase large chain, found in Kigelia africana (Sausage tree).